Consider the following 324-residue polypeptide: Lactonase drp35 (324 aa).

Ca(2+) is bound by residues E47, S109, G111, D129, T132, Y134, D137, N184, D235, and S236. D235 functions as the Proton donor in the catalytic mechanism.

Belongs to the SMP-30/CGR1 family. The cofactor is Ca(2+).

The protein localises to the cytoplasm. Functionally, exhibits lactonase activity. Acts in cells with perturbed membrane integrity and is possibly related to the membrane homeostasis. The sequence is that of Lactonase drp35 (drp35) from Staphylococcus aureus (strain USA300).